Here is a 289-residue protein sequence, read N- to C-terminus: Mitochondrial fission regulator 1-like (289 aa).

Position 27 is a phosphothreonine (T27). Phosphoserine is present on S38. At S100 the chain carries Phosphoserine; by AMPK. 3 positions are modified to phosphoserine: S107, S221, and S222. Position 235 is a phosphoserine; by AMPK (S235). Phosphoserine occurs at positions 258 and 270.

Belongs to the MTFR1 family. In terms of processing, phosphorylated by AMPK. Upon stress, phosphorylation at Ser-100 and Ser-235 by AMPK is sufficient to induce mitochondrial fragmentation.

Its subcellular location is the mitochondrion outer membrane. In terms of biological role, mitochondrial protein required for adaptation of miochondrial dynamics to metabolic changes. Regulates mitochondrial morphology at steady state and mediates AMPK-dependent stress-induced mitochondrial fragmentation via the control of OPA1 levels. This is Mitochondrial fission regulator 1-like (Mtfr1l) from Mus musculus (Mouse).